The chain runs to 477 residues: Methionine aminopeptidase 2 (477 aa).

Residues 1 to 121 are disordered; that stretch reads MAGVEEAASC…TDPPSVPICD (121 aa). An N-acetylalanine modification is found at Ala2. A compositionally biased stretch (basic residues) spans 36–46; it reads KKKKRKKKKSK. At Ser45 the chain carries Phosphoserine. Residues 54 to 78 are compositionally biased toward basic and acidic residues; sequence EPDKEAGASVDEVTRQLERQALEEK. Ser62 bears the Phosphoserine; alternate mark. O-linked (GlcNAc) serine; alternate glycosylation is present at Ser62. A compositionally biased stretch (acidic residues) spans 79–91; it reads EKDDDDEDGDGDG. Basic residues predominate over residues 96–108; the sequence is GKKKKKKKKKRGP. His230 provides a ligand contact to substrate. A divalent metal cation contacts are provided by Asp250, Asp261, and His330. His338 contributes to the substrate binding site. A divalent metal cation contacts are provided by Glu363 and Glu458.

It belongs to the peptidase M24A family. Methionine aminopeptidase eukaryotic type 2 subfamily. As to quaternary structure, binds EIF2S1 at low magnesium concentrations. Interacts strongly with the eIF-2 gamma-subunit EIF2S3. The cofactor is Co(2+). Requires Zn(2+) as cofactor. Mn(2+) is required as a cofactor. Fe(2+) serves as cofactor. Contains approximately 12 O-linked N-acetylglucosamine (GlcNAc) residues. O-glycosylation is required for EIF2S1 binding.

It localises to the cytoplasm. It catalyses the reaction Release of N-terminal amino acids, preferentially methionine, from peptides and arylamides.. In terms of biological role, cotranslationally removes the N-terminal methionine from nascent proteins. The N-terminal methionine is often cleaved when the second residue in the primary sequence is small and uncharged (Met-Ala-, Cys, Gly, Pro, Ser, Thr, or Val). Functionally, protects eukaryotic initiation factor EIF2S1 from translation-inhibiting phosphorylation by inhibitory kinases such as EIF2AK2/PKR and EIF2AK1/HCR. Plays a critical role in the regulation of protein synthesis. In Bos taurus (Bovine), this protein is Methionine aminopeptidase 2.